A 393-amino-acid chain; its full sequence is uncharacterized protein (393 aa).

Residues 345 to 393 (PNKWATDDAARREMERTRKARYRAKNRAVADPEDSPPGKRLRRGPKSST) are disordered. Basic and acidic residues predominate over residues 349-361 (ATDDAARREMERT). Over residues 383–393 (KRLRRGPKSST) the composition is skewed to basic residues.

This is an uncharacterized protein from Ictalurid herpesvirus 1 (strain Auburn) (IcHV-1).